Reading from the N-terminus, the 335-residue chain is Biotin synthase (335 aa).

The Radical SAM core domain occupies 41 to 269 (KQIQVCKLIS…TSDVRLSAGR (229 aa)). Residues cysteine 56, cysteine 60, and cysteine 63 each coordinate [4Fe-4S] cluster. Positions 100, 132, 192, and 264 each coordinate [2Fe-2S] cluster.

This sequence belongs to the radical SAM superfamily. Biotin synthase family. Homodimer. Requires [4Fe-4S] cluster as cofactor. The cofactor is [2Fe-2S] cluster.

It catalyses the reaction (4R,5S)-dethiobiotin + (sulfur carrier)-SH + 2 reduced [2Fe-2S]-[ferredoxin] + 2 S-adenosyl-L-methionine = (sulfur carrier)-H + biotin + 2 5'-deoxyadenosine + 2 L-methionine + 2 oxidized [2Fe-2S]-[ferredoxin]. The protein operates within cofactor biosynthesis; biotin biosynthesis; biotin from 7,8-diaminononanoate: step 2/2. Catalyzes the conversion of dethiobiotin (DTB) to biotin by the insertion of a sulfur atom into dethiobiotin via a radical-based mechanism. This chain is Biotin synthase, found in Nostoc sp. (strain PCC 7120 / SAG 25.82 / UTEX 2576).